Consider the following 484-residue polypeptide: MSTQIEDQDWKSKLNIPKKDTRPQTEDVLSTKGNTFEDFYLKRELLMGIFEAGFEKPSPIQEESIPVALAGRDILARAKNGTGKTAAFVIPTLEKVKSKHNKIQALIMVPTRELALQTSQVVRTLGKHCGISCMVTTGGTNLRDDILRLNETVHILVGTPGRVLDLASRKVADLSECNLFIMDEADKMLSRDFKSIIEQILVFLPKNHQSLLFSATFPLSVKEFMVNHLHKPYEINLMDELTLKGITQYYAFVEEKQKLHCLNTLFSKLQINQAIIFCNSTNRVELLAKKITDLGYSCYYSHARMKQQERNRVFHEFRQGKVRTLVCSDLLTRGIDIQAVNVVINFDFPKTAETYLHRIGRSGRFGHLGLAINLINWNDRFNLYKIEQELGTEIQAIPATIDKSLYVANDNSAVPVPFPIEQSHVQPSMQQQHMPLPPQQPIPNQQFGGMPQQYSPQQQQYQQYPPQGMAMPPQGIQMQQQPQF.

Residues 1–27 (MSTQIEDQDWKSKLNIPKKDTRPQTED) are disordered. Basic and acidic residues predominate over residues 8–25 (QDWKSKLNIPKKDTRPQT). A Q motif motif is present at residues 34-62 (NTFEDFYLKRELLMGIFEAGFEKPSPIQE). The Helicase ATP-binding domain maps to 65 to 235 (IPVALAGRDI…VNHLHKPYEI (171 aa)). ATP is bound at residue 78 to 85 (AKNGTGKT). Positions 183–186 (DEAD) match the DEAD box motif. Residues 245-405 (GITQYYAFVE…AIPATIDKSL (161 aa)) form the Helicase C-terminal domain. The interval 430 to 484 (QQQHMPLPPQQPIPNQQFGGMPQQYSPQQQQYQQYPPQGMAMPPQGIQMQQQPQF) is disordered. Over residues 442–484 (IPNQQFGGMPQQYSPQQQQYQQYPPQGMAMPPQGIQMQQQPQF) the composition is skewed to low complexity.

Belongs to the DEAD box helicase family. DDX6/DHH1 subfamily.

The protein resides in the cytoplasm. The protein localises to the P-body. It catalyses the reaction ATP + H2O = ADP + phosphate + H(+). ATP-dependent RNA helicase involved in mRNA turnover, and more specifically in mRNA decapping by activating the decapping enzyme DCP1. Is involved in G1/S DNA-damage checkpoint recovery, probably through the regulation of the translational status of a subset of mRNAs. May also have a role in translation and mRNA nuclear export. The sequence is that of ATP-dependent RNA helicase DHH1 (DHH1) from Vanderwaltozyma polyspora (strain ATCC 22028 / DSM 70294 / BCRC 21397 / CBS 2163 / NBRC 10782 / NRRL Y-8283 / UCD 57-17) (Kluyveromyces polysporus).